Consider the following 114-residue polypeptide: Probable non-functional T cell receptor beta variable 6-7 (114 aa).

The signal sequence occupies residues 1–21; the sequence is MSLGLLCCVAFSLLWAGPMNA. Residues 22-114 form the Ig-like domain; the sequence is GVTQTPKFHV…TSVYFCASSY (93 aa). An intrachain disulfide couples Cys-42 to Cys-110. Residue Asn-84 is glycosylated (N-linked (GlcNAc...) asparagine).

Alpha-beta TR is a heterodimer composed of an alpha and beta chain; disulfide-linked. The alpha-beta TR is associated with the transmembrane signaling CD3 coreceptor proteins to form the TR-CD3 (TcR or TCR). The assembly of alpha-beta TR heterodimers with CD3 occurs in the endoplasmic reticulum where a single alpha-beta TR heterodimer associates with one CD3D-CD3E heterodimer, one CD3G-CD3E heterodimer and one CD247 homodimer forming a stable octameric structure. CD3D-CD3E and CD3G-CD3E heterodimers preferentially associate with TR alpha and TR beta chains, respectively. The association of the CD247 homodimer is the last step of TcR assembly in the endoplasmic reticulum and is required for transport to the cell surface.

It is found in the cell membrane. Probable non-functional open reading frame (ORF) of V region of the variable domain of T cell receptor (TR) beta chain. Non-functional ORF generally cannot participate in the synthesis of a productive T cell receptor (TR) chain due to altered V-(D)-J or switch recombination and/or splicing site (at mRNA level) and/or conserved amino acid change (protein level). Alpha-beta T cell receptors are antigen specific receptors which are essential to the immune response and are present on the cell surface of T lymphocytes. Recognize peptide-major histocompatibility (MH) (pMH) complexes that are displayed by antigen presenting cells (APC), a prerequisite for efficient T cell adaptive immunity against pathogens. Binding of alpha-beta TR to pMH complex initiates TR-CD3 clustering on the cell surface and intracellular activation of LCK that phosphorylates the ITAM motifs of CD3G, CD3D, CD3E and CD247 enabling the recruitment of ZAP70. In turn ZAP70 phosphorylates LAT, which recruits numerous signaling molecules to form the LAT signalosome. The LAT signalosome propagates signal branching to three major signaling pathways, the calcium, the mitogen-activated protein kinase (MAPK) kinase and the nuclear factor NF-kappa-B (NF-kB) pathways, leading to the mobilization of transcription factors that are critical for gene expression and essential for T cell growth and differentiation. The T cell repertoire is generated in the thymus, by V-(D)-J rearrangement. This repertoire is then shaped by intrathymic selection events to generate a peripheral T cell pool of self-MH restricted, non-autoaggressive T cells. Post-thymic interaction of alpha-beta TR with the pMH complexes shapes TR structural and functional avidity. The protein is Probable non-functional T cell receptor beta variable 6-7 of Homo sapiens (Human).